A 138-amino-acid polypeptide reads, in one-letter code: Large ribosomal subunit protein uL16c (138 aa).

This sequence belongs to the universal ribosomal protein uL16 family. As to quaternary structure, part of the 50S ribosomal subunit.

The protein resides in the plastid. It localises to the chloroplast. The chain is Large ribosomal subunit protein uL16c from Chaetosphaeridium globosum (Charophycean green alga).